The chain runs to 365 residues: Carbamoyl phosphate synthase small chain (365 aa).

2 CPSase regions span residues Met1–Gly166 and Met1–His169. Residues Ser45, Gly218, and Gly220 each coordinate L-glutamine. Residues Arg170–Glu357 enclose the Glutamine amidotransferase type-1 domain. The Nucleophile role is filled by Cys245. L-glutamine is bound by residues Leu246, Gln249, Asn287, Gly289, and Tyr290. Active-site residues include His330 and Glu332.

It belongs to the CarA family. Composed of two chains; the small (or glutamine) chain promotes the hydrolysis of glutamine to ammonia, which is used by the large (or ammonia) chain to synthesize carbamoyl phosphate. Tetramer of heterodimers (alpha,beta)4.

The catalysed reaction is hydrogencarbonate + L-glutamine + 2 ATP + H2O = carbamoyl phosphate + L-glutamate + 2 ADP + phosphate + 2 H(+). The enzyme catalyses L-glutamine + H2O = L-glutamate + NH4(+). Its pathway is amino-acid biosynthesis; L-arginine biosynthesis; carbamoyl phosphate from bicarbonate: step 1/1. It functions in the pathway pyrimidine metabolism; UMP biosynthesis via de novo pathway; (S)-dihydroorotate from bicarbonate: step 1/3. Small subunit of the glutamine-dependent carbamoyl phosphate synthetase (CPSase). CPSase catalyzes the formation of carbamoyl phosphate from the ammonia moiety of glutamine, carbonate, and phosphate donated by ATP, constituting the first step of 2 biosynthetic pathways, one leading to arginine and/or urea and the other to pyrimidine nucleotides. The small subunit (glutamine amidotransferase) binds and cleaves glutamine to supply the large subunit with the substrate ammonia. In Bacillus cereus (strain ATCC 10987 / NRS 248), this protein is Carbamoyl phosphate synthase small chain.